The chain runs to 122 residues: Large ribosomal subunit protein uL14 (122 aa).

Belongs to the universal ribosomal protein uL14 family. As to quaternary structure, part of the 50S ribosomal subunit. Forms a cluster with proteins L3 and L19. In the 70S ribosome, L14 and L19 interact and together make contacts with the 16S rRNA in bridges B5 and B8.

Its function is as follows. Binds to 23S rRNA. Forms part of two intersubunit bridges in the 70S ribosome. The sequence is that of Large ribosomal subunit protein uL14 from Mycoplasma mobile (strain ATCC 43663 / 163K / NCTC 11711) (Mesomycoplasma mobile).